The following is a 53-amino-acid chain: Non-classical export protein 1 (53 aa).

The chain crosses the membrane as a helical span at residues 7–29 (FLLGKFSDPLLAIMVGCLSYYVY).

Belongs to the NCE101 family.

The protein localises to the membrane. Involved in a novel pathway of export of proteins that lack a cleavable signal sequence. May be part of the export machinery or may also be a substrate for non-classical export. The protein is Non-classical export protein 1 (NCE101) of Saccharomyces cerevisiae (strain ATCC 204508 / S288c) (Baker's yeast).